Consider the following 367-residue polypeptide: Glycerol dehydrogenase (367 aa).

NAD(+)-binding residues include D37, G94, K95, T116, and S119. D121 contacts glycerol. NAD(+)-binding residues include S125, L127, and Y131. Residues D171, H254, and H271 each contribute to the Zn(2+) site. H254 contacts glycerol.

Belongs to the iron-containing alcohol dehydrogenase family. Zn(2+) is required as a cofactor.

The enzyme catalyses glycerol + NAD(+) = dihydroxyacetone + NADH + H(+). Its pathway is polyol metabolism; glycerol fermentation; glycerone phosphate from glycerol (oxidative route): step 1/2. Functionally, catalyzes the NAD-dependent oxidation of glycerol to dihydroxyacetone (glycerone). Allows microorganisms to utilize glycerol as a source of carbon under anaerobic conditions. The sequence is that of Glycerol dehydrogenase (gldA) from Escherichia coli O6:H1 (strain CFT073 / ATCC 700928 / UPEC).